A 187-amino-acid polypeptide reads, in one-letter code: Accessory gene regulator protein B (187 aa).

5 consecutive transmembrane segments (helical) span residues 49-69 (ISIF…YMLI), 82-102 (ILCY…LINI), 106-126 (FTYL…YAPA), 144-164 (LSII…PFYA), and 166-186 (FMLL…FPKE).

It belongs to the AgrB family.

Its subcellular location is the cell membrane. Functionally, essential for the production of a quorum sensing system signal molecule, the autoinducing peptide (AIP). This quorum sensing system is responsible for the regulation of the expression of virulence factor genes. Involved in the proteolytic processing of AgrD, the precursor of AIP. The chain is Accessory gene regulator protein B from Staphylococcus aureus (strain Mu50 / ATCC 700699).